We begin with the raw amino-acid sequence, 348 residues long: Probable dual-specificity RNA methyltransferase RlmN (348 aa).

Glutamate 93 (proton acceptor) is an active-site residue. The Radical SAM core domain maps to threonine 99–aspartate 333. A disulfide bridge links cysteine 106 with cysteine 338. 3 residues coordinate [4Fe-4S] cluster: cysteine 113, cysteine 117, and cysteine 120. Residues glycine 160 to glutamate 161, serine 190, serine 219 to histidine 221, and asparagine 295 contribute to the S-adenosyl-L-methionine site. Cysteine 338 functions as the S-methylcysteine intermediate in the catalytic mechanism.

This sequence belongs to the radical SAM superfamily. RlmN family. [4Fe-4S] cluster is required as a cofactor.

The protein resides in the cytoplasm. The enzyme catalyses adenosine(2503) in 23S rRNA + 2 reduced [2Fe-2S]-[ferredoxin] + 2 S-adenosyl-L-methionine = 2-methyladenosine(2503) in 23S rRNA + 5'-deoxyadenosine + L-methionine + 2 oxidized [2Fe-2S]-[ferredoxin] + S-adenosyl-L-homocysteine. It carries out the reaction adenosine(37) in tRNA + 2 reduced [2Fe-2S]-[ferredoxin] + 2 S-adenosyl-L-methionine = 2-methyladenosine(37) in tRNA + 5'-deoxyadenosine + L-methionine + 2 oxidized [2Fe-2S]-[ferredoxin] + S-adenosyl-L-homocysteine. Functionally, specifically methylates position 2 of adenine 2503 in 23S rRNA and position 2 of adenine 37 in tRNAs. The polypeptide is Probable dual-specificity RNA methyltransferase RlmN (Prochlorococcus marinus (strain AS9601)).